The sequence spans 422 residues: S-adenosylmethionine synthase (422 aa).

An ATP-binding site is contributed by His-16. Asp-18 serves as a coordination point for Mg(2+). Glu-44 is a binding site for K(+). Residues Glu-57 and Gln-100 each contribute to the L-methionine site. A flexible loop region spans residues Gln-100–Ala-110. Residues Asp-175–Lys-177, Lys-251–Phe-252, Asp-260, Arg-266–Lys-267, Ala-283, and Lys-287 contribute to the ATP site. Asp-260 serves as a coordination point for L-methionine. Lys-291 is a binding site for L-methionine.

Belongs to the AdoMet synthase family. As to quaternary structure, homotetramer; dimer of dimers. The cofactor is Mg(2+). K(+) is required as a cofactor.

Its subcellular location is the cytoplasm. The enzyme catalyses L-methionine + ATP + H2O = S-adenosyl-L-methionine + phosphate + diphosphate. It functions in the pathway amino-acid biosynthesis; S-adenosyl-L-methionine biosynthesis; S-adenosyl-L-methionine from L-methionine: step 1/1. Functionally, catalyzes the formation of S-adenosylmethionine (AdoMet) from methionine and ATP. The overall synthetic reaction is composed of two sequential steps, AdoMet formation and the subsequent tripolyphosphate hydrolysis which occurs prior to release of AdoMet from the enzyme. The protein is S-adenosylmethionine synthase of Rippkaea orientalis (strain PCC 8801 / RF-1) (Cyanothece sp. (strain PCC 8801)).